A 417-amino-acid chain; its full sequence is Imidazolonepropionase (417 aa).

Positions 80 and 82 each coordinate Fe(3+). Zn(2+)-binding residues include H80 and H82. 4-imidazolone-5-propanoate-binding residues include R89, Y152, and H187. An N-formimidoyl-L-glutamate-binding site is contributed by Y152. Residue H252 participates in Fe(3+) binding. H252 serves as a coordination point for Zn(2+). Residue E255 participates in 4-imidazolone-5-propanoate binding. A Fe(3+)-binding site is contributed by D326. D326 contributes to the Zn(2+) binding site. Residues N328 and G330 each coordinate N-formimidoyl-L-glutamate. A 4-imidazolone-5-propanoate-binding site is contributed by S331.

This sequence belongs to the metallo-dependent hydrolases superfamily. HutI family. Zn(2+) serves as cofactor. It depends on Fe(3+) as a cofactor.

Its subcellular location is the cytoplasm. It carries out the reaction 4-imidazolone-5-propanoate + H2O = N-formimidoyl-L-glutamate. It participates in amino-acid degradation; L-histidine degradation into L-glutamate; N-formimidoyl-L-glutamate from L-histidine: step 3/3. Catalyzes the hydrolytic cleavage of the carbon-nitrogen bond in imidazolone-5-propanoate to yield N-formimidoyl-L-glutamate. It is the third step in the universal histidine degradation pathway. The polypeptide is Imidazolonepropionase (Bacteroides thetaiotaomicron (strain ATCC 29148 / DSM 2079 / JCM 5827 / CCUG 10774 / NCTC 10582 / VPI-5482 / E50)).